The following is a 339-amino-acid chain: D-erythrose-4-phosphate dehydrogenase (339 aa).

Residues 12–13 and Arg81 each bind NAD(+); that span reads RI. Residues 154–156, Arg200, 213–214, and Arg236 contribute to the substrate site; these read SCT and TK. The active-site Nucleophile is the Cys155. Residue Asn318 coordinates NAD(+).

The protein belongs to the glyceraldehyde-3-phosphate dehydrogenase family. Epd subfamily. As to quaternary structure, homotetramer.

The protein localises to the cytoplasm. The catalysed reaction is D-erythrose 4-phosphate + NAD(+) + H2O = 4-phospho-D-erythronate + NADH + 2 H(+). Its pathway is cofactor biosynthesis; pyridoxine 5'-phosphate biosynthesis; pyridoxine 5'-phosphate from D-erythrose 4-phosphate: step 1/5. Functionally, catalyzes the NAD-dependent conversion of D-erythrose 4-phosphate to 4-phosphoerythronate. The sequence is that of D-erythrose-4-phosphate dehydrogenase from Escherichia fergusonii (strain ATCC 35469 / DSM 13698 / CCUG 18766 / IAM 14443 / JCM 21226 / LMG 7866 / NBRC 102419 / NCTC 12128 / CDC 0568-73).